A 482-amino-acid chain; its full sequence is tRNA sulfurtransferase (482 aa).

The THUMP domain maps to 61 to 165; sequence LAIRDALTRI…DDRLLLIKGR (105 aa). Residues 183 to 184, Lys-265, Gly-287, and Gln-296 contribute to the ATP site; that span reads LI. Cys-344 and Cys-456 are disulfide-bonded. In terms of domain architecture, Rhodanese spans 404–482; it reads FGPNDVILDI…GFNNVKVYRP (79 aa). Catalysis depends on Cys-456, which acts as the Cysteine persulfide intermediate.

Belongs to the ThiI family.

It localises to the cytoplasm. It catalyses the reaction [ThiI sulfur-carrier protein]-S-sulfanyl-L-cysteine + a uridine in tRNA + 2 reduced [2Fe-2S]-[ferredoxin] + ATP + H(+) = [ThiI sulfur-carrier protein]-L-cysteine + a 4-thiouridine in tRNA + 2 oxidized [2Fe-2S]-[ferredoxin] + AMP + diphosphate. The enzyme catalyses [ThiS sulfur-carrier protein]-C-terminal Gly-Gly-AMP + S-sulfanyl-L-cysteinyl-[cysteine desulfurase] + AH2 = [ThiS sulfur-carrier protein]-C-terminal-Gly-aminoethanethioate + L-cysteinyl-[cysteine desulfurase] + A + AMP + 2 H(+). Its pathway is cofactor biosynthesis; thiamine diphosphate biosynthesis. Its function is as follows. Catalyzes the ATP-dependent transfer of a sulfur to tRNA to produce 4-thiouridine in position 8 of tRNAs, which functions as a near-UV photosensor. Also catalyzes the transfer of sulfur to the sulfur carrier protein ThiS, forming ThiS-thiocarboxylate. This is a step in the synthesis of thiazole, in the thiamine biosynthesis pathway. The sulfur is donated as persulfide by IscS. The sequence is that of tRNA sulfurtransferase from Escherichia coli O8 (strain IAI1).